A 359-amino-acid chain; its full sequence is DNA replication and repair protein RecF (359 aa).

30 to 37 contacts ATP; that stretch reads GPNGSGKT.

The protein belongs to the RecF family.

It is found in the cytoplasm. Functionally, the RecF protein is involved in DNA metabolism; it is required for DNA replication and normal SOS inducibility. RecF binds preferentially to single-stranded, linear DNA. It also seems to bind ATP. This chain is DNA replication and repair protein RecF, found in Vibrio vulnificus (strain YJ016).